Reading from the N-terminus, the 306-residue chain is Ribosomal RNA small subunit methyltransferase H (306 aa).

S-adenosyl-L-methionine contacts are provided by residues 33 to 35 (GGY), aspartate 51, phenylalanine 78, aspartate 96, and glutamine 103.

It belongs to the methyltransferase superfamily. RsmH family.

Its subcellular location is the cytoplasm. It catalyses the reaction cytidine(1402) in 16S rRNA + S-adenosyl-L-methionine = N(4)-methylcytidine(1402) in 16S rRNA + S-adenosyl-L-homocysteine + H(+). Functionally, specifically methylates the N4 position of cytidine in position 1402 (C1402) of 16S rRNA. The polypeptide is Ribosomal RNA small subunit methyltransferase H (Rickettsia felis (strain ATCC VR-1525 / URRWXCal2) (Rickettsia azadi)).